Consider the following 263-residue polypeptide: Small ribosomal subunit protein bS1c (263 aa).

3 consecutive S1 motif domains span residues 27–96 (GDIV…LSIR), 114–178 (DSLL…LSHR), and 192–260 (GNII…LSMK).

This sequence belongs to the bacterial ribosomal protein bS1 family.

Its subcellular location is the plastid. The protein localises to the chloroplast. This Pyropia yezoensis (Susabi-nori) protein is Small ribosomal subunit protein bS1c (rps1).